A 169-amino-acid chain; its full sequence is Large ribosomal subunit protein uL23 (169 aa).

The segment at 1 to 20 is disordered; that stretch reads MAGKKVKSNTPKQDLSVSKS. The span at 8–20 shows a compositional bias: polar residues; sequence SNTPKQDLSVSKS.

The protein belongs to the universal ribosomal protein uL23 family.

This protein binds to a specific region on the 26S rRNA. The chain is Large ribosomal subunit protein uL23 (rpl23a) from Dictyostelium discoideum (Social amoeba).